We begin with the raw amino-acid sequence, 619 residues long: Adagio protein 3 (619 aa).

The region spanning 44–123 (VGMFYYPMTP…SEIRRCLEEG (80 aa)) is the PAS domain. Cysteine 91 is subject to S-4a-FMN cysteine. The 42-residue stretch at 127–168 (QGELLNFRKDGTPLVNRLRLAPIRDDDGTITHVIGIQVFSET) folds into the PAC domain. One can recognise an F-box domain in the interval 211 to 257 (ILQLSDEVLAHNILSRLTPRDVASIGSACRRLRQLTKNESVRKMVCQ). 5 Kelch repeats span residues 304–354 (SRCN…TSSP), 357–404 (RWGH…AGGT), 409–457 (RSWH…PTSW), 462–513 (RLGH…ECSA), and 523–571 (RLDH…NVPG).

It belongs to the ADAGIO family. As to quaternary structure, interacts with ADO1 (via Kelch repeats), ADO2 (via Kelch repeats), SKP1A/ASK1, SKP1B/ASK2, ASK3, SKP1K/ASK11, ASK12, ASK13 and SKP1N/ASK14. Interacts (via Kelch repeats) with CDF1, CDF2 and CDF3. Interacts (via N-terminus) with CO and GI (via N-terminus) in a blue-light-dependent manner. FMN binds covalently to cysteine after exposure to blue light and is reversed in the dark. Highly expressed in stomata and leaves and to a lower extent in seeds, roots, rosettes, stems and siliques. Also present in sepals and anther filaments.

The protein resides in the nucleus. It localises to the cytoplasm. Its pathway is protein modification; protein ubiquitination. Functionally, component of an E3 ubiquitin ligase complex that plays a central role in blue light-dependent circadian cycles. Acts as a blue light photoreceptor, due to the presence of FMN, that mediates light-regulated protein degradation of critical clock components by targeting them to the proteasome complex. The SCF(ADO3) E3 ubiquitin ligase complex is involved in the regulation of circadian clock-dependent processes including transition to flowering time, hypocotyl elongation, cotyledons and leaf movement rhythms. Forms a complex with 'GIGANTEA' (GI) to regulate 'CONSTANS' (CO) expression. Promotes CO expression during the light period of long days by decreasing the stability of CDF1 and CDF2 and by interacting directly with the CO protein and stabilizing it. ADO3 function is mainly GI dependent. Does not act as a regulator of CDF1 transcription. The interactions of ADO1/ZTL and ADO2 with ADO3 prevent its interaction with CDF1. The chain is Adagio protein 3 (ADO3) from Arabidopsis thaliana (Mouse-ear cress).